The sequence spans 448 residues: Na(+)-malate symporter (448 aa).

Helical transmembrane passes span 31 to 51 (IGVI…LAAY), 60 to 80 (LGGF…GQRI), 86 to 106 (IGGP…YNVL), 123 to 143 (FLYF…NRIV), 153 to 173 (VPLV…GFIF), 182 to 202 (FFVV…PLSI), 214 to 234 (VFVS…IICA), 276 to 293 (LMGA…FGGL), 297 to 319 (FIFI…ANIL), 333 to 353 (FISS…FIPL), and 359 to 379 (VISI…IGSG).

The protein belongs to the 2-hydroxycarboxylate transporter (2-HCT) (TC 2.A.24) family.

The protein localises to the cell membrane. In terms of biological role, acts as a Na(+)-malate symporter, as it catalyzes malate-dependent uptake of Na(+) and Na(+)-dependent uptake of malate. This chain is Na(+)-malate symporter, found in Bacillus subtilis (strain 168).